Consider the following 61-residue polypeptide: Sec-independent protein translocase protein TatA (61 aa).

The helical transmembrane segment at 1-21 (MFGIGMPELIVILVIVLVVFG) threads the bilayer.

This sequence belongs to the TatA/E family. As to quaternary structure, the Tat system comprises two distinct complexes: a TatABC complex, containing multiple copies of TatA, TatB and TatC subunits, and a separate TatA complex, containing only TatA subunits. Substrates initially bind to the TatABC complex, which probably triggers association of the separate TatA complex to form the active translocon.

It localises to the cell inner membrane. Its function is as follows. Part of the twin-arginine translocation (Tat) system that transports large folded proteins containing a characteristic twin-arginine motif in their signal peptide across membranes. TatA could form the protein-conducting channel of the Tat system. In Geobacter metallireducens (strain ATCC 53774 / DSM 7210 / GS-15), this protein is Sec-independent protein translocase protein TatA.